Reading from the N-terminus, the 1102-residue chain is Centrosomal protein of 128 kDa (1102 aa).

Phosphoserine occurs at positions 31, 248, and 290. 2 coiled-coil regions span residues 215 to 822 and 878 to 959; these read VSDR…LETE and EELK…ALQM. The tract at residues 326-346 is disordered; the sequence is QHQVPCISKQPLSHQDDQGDD. Disordered regions lie at residues 991-1048 and 1070-1102; these read SEKT…DHSR and DPAS…KYKK. A compositionally biased stretch (basic and acidic residues) spans 1009-1027; that stretch reads QQRRDDTKPRIKSFRDDRP. 2 stretches are compositionally biased toward polar residues: residues 1039–1048 and 1076–1089; these read HSSSCQDHSR and GDTT…TSPQ. Over residues 1090–1102 the composition is skewed to basic and acidic residues; sequence SKKEEHEIKKYKK.

It localises to the cytoplasm. The protein resides in the cytoskeleton. It is found in the microtubule organizing center. The protein localises to the centrosome. Its subcellular location is the centriole. It localises to the spindle pole. The polypeptide is Centrosomal protein of 128 kDa (Cep128) (Mus musculus (Mouse)).